Consider the following 1180-residue polypeptide: IQ domain-containing protein N (1180 aa).

A disordered region spans residues 34 to 78; that stretch reads HPPAPAHPSLLDKMEKAPPQPQHEGLKSKEHLPQQPAEGKTASRR. The IQ 1 domain occupies 103-132; it reads HARAATLIQANWRGYWLRQKLISQMMAAKA. 3 disordered regions span residues 283-324, 476-496, and 786-820; these read RVSA…ETPK, MSKT…PQTR, and QRLG…TQGG. IQ domains lie at 926 to 955, 956 to 978, 979 to 1001, 1113 to 1142, and 1143 to 1165; these read RILA…GAMV, IQAT…ATTT, IQSA…MLHP, QDKA…AAKI, and VQAT…LLGP.

Interacts with calmodulin.

Its function is as follows. Essential for spermiogenesis and fertilization. May be required for manchette assembly in elongating spermatids. This Homo sapiens (Human) protein is IQ domain-containing protein N.